The following is an 878-amino-acid chain: E3 ubiquitin-protein ligase BRE1-like 1 (878 aa).

The segment at 1–21 (MASTGEPDRKRRHFSSISPSE) is disordered. 4 coiled-coil regions span residues 48 to 76 (QNLK…IKEK), 200 to 261 (QLAL…ELQQ), 293 to 382 (SDRE…EKLQ), and 537 to 624 (LDMY…ILKS). The RING-type zinc-finger motif lies at 826 to 865 (CKACNDRPKEVVITKCYHLFCNPCVQKLTGTRQKKCPTCS).

It belongs to the BRE1 family. In terms of assembly, may act as a tetramer consisting of two copies of HUB1 and two copies of HUB2. Interacts with MED21. As to expression, ubiquitously expressed.

It localises to the nucleus. The enzyme catalyses S-ubiquitinyl-[E2 ubiquitin-conjugating enzyme]-L-cysteine + [acceptor protein]-L-lysine = [E2 ubiquitin-conjugating enzyme]-L-cysteine + N(6)-ubiquitinyl-[acceptor protein]-L-lysine.. Its pathway is protein modification; protein ubiquitination. Functionally, E3 ubiquitin-protein ligase that monoubiquitinates H2B to form H2BK143ub1. H2BK143ub1 gives a specific tag for epigenetic transcriptional activation and is also prerequisite for H3K4me and maybe H3K79me. It thereby plays a central role in histone code and gene regulation. Forms a ubiquitin ligase complex in cooperation with the E2 enzyme UBC2/RAD6. Required for the regulation of flowering time and defense against necrotrophic fungal pathogens. Involved in the control of seed dormancy and germination. This is E3 ubiquitin-protein ligase BRE1-like 1 (HUB1) from Arabidopsis thaliana (Mouse-ear cress).